The sequence spans 307 residues: Thiamine-monophosphate kinase (307 aa).

Residues D26, T37, T38, and D39 each contribute to the Mg(2+) site. Residue H46 participates in substrate binding. Mg(2+)-binding residues include D68 and D117. Residues 116 to 117 and R140 contribute to the ATP site; that span reads GD. Residue D207 coordinates Mg(2+). Residue T209 coordinates ATP. D210 lines the Mg(2+) pocket. The substrate site is built by E254 and F304.

This sequence belongs to the thiamine-monophosphate kinase family.

The catalysed reaction is thiamine phosphate + ATP = thiamine diphosphate + ADP. It participates in cofactor biosynthesis; thiamine diphosphate biosynthesis; thiamine diphosphate from thiamine phosphate: step 1/1. In terms of biological role, catalyzes the ATP-dependent phosphorylation of thiamine-monophosphate (TMP) to form thiamine-pyrophosphate (TPP), the active form of vitamin B1. The chain is Thiamine-monophosphate kinase from Leptospira interrogans serogroup Icterohaemorrhagiae serovar Lai (strain 56601).